Consider the following 141-residue polypeptide: MLDTQQIKEIIPHRYPFLLVDRITEVEEGKRAAGYKNVTANEDFFNGHFPEYPVMPGVLIVEALAQVGAVAMLIKEENRGRLAFFAGIDNCRFKKQVKPGDKLELEVDITRARGTIGRGKGVAKVDGELVCEAELTFALGE.

His-48 is an active-site residue.

The protein belongs to the thioester dehydratase family. FabZ subfamily.

It is found in the cytoplasm. It carries out the reaction a (3R)-hydroxyacyl-[ACP] = a (2E)-enoyl-[ACP] + H2O. In terms of biological role, involved in unsaturated fatty acids biosynthesis. Catalyzes the dehydration of short chain beta-hydroxyacyl-ACPs and long chain saturated and unsaturated beta-hydroxyacyl-ACPs. The sequence is that of 3-hydroxyacyl-[acyl-carrier-protein] dehydratase FabZ from Bacillus velezensis (strain DSM 23117 / BGSC 10A6 / LMG 26770 / FZB42) (Bacillus amyloliquefaciens subsp. plantarum).